The chain runs to 54 residues: uncharacterized protein (54 aa).

The N-terminal stretch at 1-13 (MLLCFHMCQRIMW) is a signal peptide.

The protein resides in the secreted. This is an uncharacterized protein from Saccharomyces cerevisiae (strain ATCC 204508 / S288c) (Baker's yeast).